Consider the following 410-residue polypeptide: Extracellular serine proteinase (410 aa).

Positions 1 to 19 are cleaved as a signal peptide; sequence MKRGGLWLLLGLLVLSACS. Positions 20–132 are excised as a propeptide; it reads SNPPAASTQE…IEADQEVRAF (113 aa). Residues 45 to 130 enclose the Inhibitor I9 domain; it reads YIVVYKENAD…AYIEADQEVR (86 aa). The 272-residue stretch at 139–410 folds into the Peptidase S8 domain; the sequence is TWGLDRIDQR…SPNLLLYTPF (272 aa). Catalysis depends on charge relay system residues D171, H204, and S356.

The protein belongs to the peptidase S8 family. Contains 4 Cys residues that form two disulfide bonds. In terms of processing, glycosylated. This proteinase has a 0.7% carbohydrate content.

It is found in the secreted. Functionally, serine proteinase with preferred activity for amino acids with aromatic side groups at the P1' side of the scissible bond. The sequence is that of Extracellular serine proteinase from Thermus sp. (strain Rt41A).